The sequence spans 349 residues: Sperm acrosomal protein FSA-ACR.1 (349 aa).

The signal sequence occupies residues 1–8; it reads MKEVYLVG. The interval 1 to 265 is disordered; that stretch reads MKEVYLVGYA…EQPSGIPPSS (265 aa). Residues 63–114 show a composition bias toward basic and acidic residues; it reads TSGEHTSVEHASAEHSSTEHTSGEHASGEHTSGERATGEHTSSEHATSEHTS. Polar residues-rich tracts occupy residues 117-142 and 154-171; these read QPSG…SGEQ and SGEQ…TSGE. Residues 178 to 189 are compositionally biased toward basic and acidic residues; the sequence is PSGEHAVAEKPS. Positions 221-248 are enriched in low complexity; it reads EQASIEKASSEQASAEQASAEQASSEQA. N342 is a glycosylation site (N-linked (GlcNAc...) asparagine).

The protein to acrosomal proteins SP-10. As to expression, testis.

It is found in the cytoplasmic vesicle. The protein localises to the secretory vesicle. It localises to the acrosome. This is Sperm acrosomal protein FSA-ACR.1 from Vulpes vulpes (Red fox).